The following is a 203-amino-acid chain: SOSS complex subunit B1 (203 aa).

Positions 22–92 (IVLETGRVTK…TLYTGRGGDL (71 aa)) form a DNA-binding region, OB. The disordered stretch occupies residues 111-203 (PNPEYIAQQS…GKEPRRTGKR (93 aa)). Positions 117 to 128 (AQQSQNKQAQAE) are enriched in polar residues. Low complexity predominate over residues 129–140 (SGTGTNSHNSSS). Polar residues predominate over residues 149–182 (ENGNGSNSSGPPTHQSTAPTHSTSGRITRSQPNH).

The protein belongs to the SOSS-B family. SOSS-B1 subfamily. In terms of assembly, component of the SOSS complex, composed of soss-b (soss-b1/nabp2 or soss-b2/nabp1), soss-a/ints3 and soss-c/inip. SOSS complexes containing soss-b1/nabp2 are more abundant than complexes containing soss-b2/nabp1.

It localises to the nucleus. Functionally, component of the SOSS complex, a multiprotein complex that functions downstream of the MRN complex to promote DNA repair and G2/M checkpoint. In the SOSS complex, acts as a sensor of single-stranded DNA that binds to single-stranded DNA. The SOSS complex associates with DNA lesions and influences diverse endpoints in the cellular DNA damage response including cell-cycle checkpoint activation, recombinational repair and maintenance of genomic stability. Required for efficient homologous recombination-dependent repair of double-strand breaks (DSBs). This is SOSS complex subunit B1 (nabp2) from Xenopus tropicalis (Western clawed frog).